Consider the following 388-residue polypeptide: Mannitol-1-phosphate 5-dehydrogenase (388 aa).

Ala5–Gly16 contributes to the NAD(+) binding site. Lys213 is an active-site residue.

It belongs to the mannitol dehydrogenase family. Monomer.

It catalyses the reaction D-mannitol 1-phosphate + NAD(+) = beta-D-fructose 6-phosphate + NADH + H(+). Catalyzes the NAD(H)-dependent interconversion of D-fructose 6-phosphate and D-mannitol 1-phosphate in the metabolism of mannitol. Has a strong preference for NADH over NADPH. The protein is Mannitol-1-phosphate 5-dehydrogenase (mpdA) of Aspergillus niger (strain ATCC MYA-4892 / CBS 513.88 / FGSC A1513).